The primary structure comprises 165 residues: Interferon gamma (165 aa).

The signal sequence occupies residues 1-23; sequence MKYTSYILAFQLCIVLGSLGCYC. At glutamine 24 the chain carries Pyrrolidone carboxylic acid. N-linked (GlcNAc...) asparagine glycosylation is found at asparagine 48 and asparagine 120.

This sequence belongs to the type II (or gamma) interferon family. In terms of assembly, homodimer. Interacts with IFNGR1 (via extracellular domain); this interaction promotes IFNGR1 dimerization. In terms of tissue distribution, released primarily from activated T lymphocytes.

It localises to the secreted. In terms of biological role, type II interferon produced by immune cells such as T-cells and NK cells that plays crucial roles in antimicrobial, antiviral, and antitumor responses by activating effector immune cells and enhancing antigen presentation. Primarily signals through the JAK-STAT pathway after interaction with its receptor IFNGR1 to affect gene regulation. Upon IFNG binding, IFNGR1 intracellular domain opens out to allow association of downstream signaling components JAK2, JAK1 and STAT1, leading to STAT1 activation, nuclear translocation and transcription of IFNG-regulated genes. Many of the induced genes are transcription factors such as IRF1 that are able to further drive regulation of a next wave of transcription. Plays a role in class I antigen presentation pathway by inducing a replacement of catalytic proteasome subunits with immunoproteasome subunits. In turn, increases the quantity, quality, and repertoire of peptides for class I MHC loading. Increases the efficiency of peptide generation also by inducing the expression of activator PA28 that associates with the proteasome and alters its proteolytic cleavage preference. Up-regulates as well MHC II complexes on the cell surface by promoting expression of several key molecules such as cathepsins B/CTSB, H/CTSH, and L/CTSL. Participates in the regulation of hematopoietic stem cells during development and under homeostatic conditions by affecting their development, quiescence, and differentiation. The protein is Interferon gamma (IFNG) of Macaca fascicularis (Crab-eating macaque).